The sequence spans 183 residues: UPF0398 protein BLi02355/BL05236 (183 aa).

The protein belongs to the UPF0398 family.

The chain is UPF0398 protein BLi02355/BL05236 from Bacillus licheniformis (strain ATCC 14580 / DSM 13 / JCM 2505 / CCUG 7422 / NBRC 12200 / NCIMB 9375 / NCTC 10341 / NRRL NRS-1264 / Gibson 46).